The primary structure comprises 153 residues: uncharacterized protein (153 aa).

Residues 1-19 form the signal peptide; sequence MRKYIPLVLFIFSWPVLCA. Catalysis depends on residues Arg46, Glu54, and Arg88.

Belongs to the thermonuclease family.

This is an uncharacterized protein from Escherichia coli O157:H7.